Reading from the N-terminus, the 263-residue chain is Undecaprenyl-diphosphatase 3 (263 aa).

A run of 8 helical transmembrane segments spans residues 15 to 37, 42 to 62, 83 to 103, 106 to 126, 142 to 162, 183 to 203, 216 to 236, and 242 to 262; these read GLTE…LIGF, AKVF…VIFW, LHII…HSAI, VLFG…LMIV, ITYK…WPGF, AEYT…LDLI, LFAT…VSFL, and VKLT…YFFI.

The protein belongs to the UppP family.

The protein resides in the cell membrane. It carries out the reaction di-trans,octa-cis-undecaprenyl diphosphate + H2O = di-trans,octa-cis-undecaprenyl phosphate + phosphate + H(+). In terms of biological role, catalyzes the dephosphorylation of undecaprenyl diphosphate (UPP). Confers resistance to bacitracin. This Bacillus thuringiensis subsp. konkukian (strain 97-27) protein is Undecaprenyl-diphosphatase 3.